A 76-amino-acid polypeptide reads, in one-letter code: MVCIPCIVIPVLLWVYKKFLEPYIYPLISPFVSRMWPRKAIRETNDKNKGKVDYKGADINGLPTRGPTEMCDKKKD.

Residues 1–37 (MVCIPCIVIPVLLWVYKKFLEPYIYPLISPFVSRMWP) form a necessary for its localzation to the endoplasmic reticulum and lipid droplets region. The span at 47–56 (KNKGKVDYKG) shows a compositional bias: basic and acidic residues. A disordered region spans residues 47-76 (KNKGKVDYKGADINGLPTRGPTEMCDKKKD).

The protein belongs to the UPF0729 family. Interacts with DERL1 and AMFR. In terms of processing, undergoes ER-associated degradation (ERAD).

Its subcellular location is the endoplasmic reticulum. It localises to the lipid droplet. Functionally, may activate the NF-kappa-B signaling pathway. In Bos taurus (Bovine), this protein is UPF0729 protein C18orf32 homolog.